The sequence spans 66 residues: Surface composition regulator (66 aa).

This sequence belongs to the GlgS family.

Major determinant of cell surface composition. Negatively regulates motility, adhesion and synthesis of biofilm exopolysaccharides. The chain is Surface composition regulator from Escherichia coli O139:H28 (strain E24377A / ETEC).